We begin with the raw amino-acid sequence, 806 residues long: MKKGIIRFLLVSFVLFFALSTGITGVQAAPASSKTSADLEKAEVFGDIDMTTSKKTTVIVELKEKSLAEAKEAGESQSKSKLKTARTKAKNKAIKAVKNGKVNREYEQVFSGFSMKLPANEIPKLLAVKDVKAVYPNVTYKTDNMKDKDVTISEDAVSPQMDDSAPYIGANDAWDLGYTGKGIKVAIIDTGVEYNHPDLKKNFGQYKGYDFVDNDYDPKETPTGDPRGEATDHGTHVAGTVAANGTIKGVAPDATLLAYRVLGPGGSGTTENVIAGVERAVQDGADVMNLSLGNSLNNPDWATSTALDWAMSEGVVAVTSNGNSGPNGWTVGSPGTSREAISVGATQLPLNEYAVTFGSYSSAKVMGYNKEDDVKALNNKEVELVEAGIGEAKDFEGKDLTGKVAVVKRGSIAFVDKADNAKKAGAIGMVVYNNLSGEIEANVPGMSVPTIKLSLEDGEKLVSALKAGETKTTFKLTVSKALGEQVADFSSRGPVMDTWMIKPDISAPGVNIVSTIPTHDPDHPYGYGSKQGTSMASPHIAGAVAVIKQAKPKWSVEQIKAAIMNTAVTLKDSDGEVYPHNAQGAGSARIMNAIKADSLVSPGSYSYGTFLKENGNETKNETFTIENQSSIRKSYTLEYSFNGSGISTSGTSRVVIPAHQTGKATAKVKVNTKKTKAGTYEGTVIVREGGKTVAKVPTLLIVKEPDYPRVTSVSVSEGSVQGTYQIETYLPAGAEELAFLVYDSNLDFAGQAGIYKNQDKGYQYFDWDGTINGGTKLPAGEYYLLAYAANKGKSSQVLTEEPFTVE.

Positions 1–28 are cleaved as a signal peptide; it reads MKKGIIRFLLVSFVLFFALSTGITGVQA. A propeptide spanning residues 29–160 is cleaved from the precursor; that stretch reads APASSKTSAD…TISEDAVSPQ (132 aa). The Inhibitor I9 domain maps to 57–142; it reads TVIVELKEKS…AVYPNVTYKT (86 aa). One can recognise a Peptidase S8 domain in the interval 158–597; sequence SPQMDDSAPY…ARIMNAIKAD (440 aa). Catalysis depends on charge relay system residues Asp-189 and His-233. The PA domain occupies 383 to 461; it reads ELVEAGIGEA…KLSLEDGEKL (79 aa). Residue Ser-534 is the Charge relay system of the active site.

The protein belongs to the peptidase S8 family. Probably undergoes C-terminal processing or proteolysis. Auto-processed to form active enzymes of several different molecular weights.

It is found in the secreted. Its subcellular location is the cell wall. Its activity is regulated as follows. Activity is inhibited by phenylmethylsulfonyl fluoride (PMSF), but not by EDTA. Functionally, serine protease. Involved in the production of the competence and sporulation stimulating factor CSF. Is directly involved in the processing of pro-CSF to CSF. Can also cleave pro-PhrA to PhrA, but cannot cleave pro-PhrE. Shows fibrinolytic activity in vitro. Not essential for growth or sporulation. The protein is Minor extracellular protease Vpr of Bacillus subtilis (strain 168).